We begin with the raw amino-acid sequence, 648 residues long: Macrolide export ATP-binding/permease protein MacB (648 aa).

An ABC transporter domain is found at 5-243; sequence LELCNVSRSY…QGVDAAVVNT (239 aa). An ATP-binding site is contributed by 41–48; it reads GVSGSGKS. The next 5 helical transmembrane spans lie at 273–293, 417–437, 523–543, 577–597, and 611–631; these read LLTMLGIIIGIASVVSIVVVG, ANVVGEVVLAGNMPVIVIGVA, LFLTLVAVISLVVGGIGVMNI, VLVCLVGGALGISLSMFIAFM, and LTALASAFLCSTFTGILFGWL.

Belongs to the ABC transporter superfamily. Macrolide exporter (TC 3.A.1.122) family. As to quaternary structure, homodimer. Part of the tripartite efflux system MacAB-TolC, which is composed of an inner membrane transporter, MacB, a periplasmic membrane fusion protein, MacA, and an outer membrane component, TolC. The complex forms a large protein conduit and can translocate molecules across both the inner and outer membranes. Interacts with MacA.

The protein resides in the cell inner membrane. Part of the tripartite efflux system MacAB-TolC. MacB is a non-canonical ABC transporter that contains transmembrane domains (TMD), which form a pore in the inner membrane, and an ATP-binding domain (NBD), which is responsible for energy generation. Confers resistance against macrolides. This is Macrolide export ATP-binding/permease protein MacB from Salmonella typhimurium (strain LT2 / SGSC1412 / ATCC 700720).